Consider the following 2116-residue polypeptide: MEKLLDEVLAPGGPYNLTVGSWVRDHVRSIVEGAWEVRDVVTAAQKRAIVAVIPRPVFTQMQVSDHPALHAISRYTRRHWIEWGPKEALHVLIDPSPGLLREVARVERRWVALCLHRTARKLATALAETAGEAWHADYVCALRGAPSGPFYVHPEDVPRGGRAVADRCLLYYTPMQMCELMRTIDATLLVAVDLWPVALAAHVGDDWDDLGIAWHLDHDGGCPADCRGAGAGPTPGYTRPCTTRIYQVLPDTAHPGRLYRCGPRLWTRDCAVAELSWEVAQHCGHQARVRAVRCTLPIRHVRSLQPSARVRLPDLVHLAEVGRWRWFSLPRPVFQRMLSYCKTLSPDAYYSERVFKFKNALSHSITLAGNVLQEGWKGTCAEEDALCAYVAFRAWQSNARLAGIMKGAKRCAADSLSVAGWLDTIWDAIKRFFGSVPLAERMEEWEQDAAVAAFDRGPLEDGGHHLDTVQPPKPLPRPEIAATWIVHAASADRHCACAPRCDVPRERPSAPAGPPDDEALIPPWLFAERRTLRCREWDFEALRARADTAATPAPLAPRPARYPTVLYRHPAHHGPWLTLDEPGEADAALVLCDPLGQPLRGPERHFAAGAHMCAQARGLQAFVRVVPPPERPWADGGARTWAKFFRGCAWAQRLLGEPAVMHLPYTDGDVPQLIALALRTLAQQGAALALSVRDLPGGAAFDANAVTAAVRADPGQLALTSPPPDNPPPPRRARRSQRHADARGPPPPAPVRDPPPLPPSPPAPRRAGDPASPISAEPADRARDAEPEVACEPGGPATPTRADPDSDIVESYARAAGPVHLRVRNIMDPPPGCKVVVNAANEGLLAGSGVCGAIFASAAATLAEDCRRLAPCPTGEAVATPGHGCGYTHIIHAVAPRRPQDPAALEQSEALLERAYRSVVALAAARRWACVACPLLGAGIYGWSAAESLRAALAAARTEPAERVSLHICHPDRATLMHASVLVGAGLAARRVSPPPTEPLASCPADDPGRSTQRTASPPAAPPGDAAAPESRGCQGCELCRYTRVTNDRAYVNLWLERDRGATGWAMRIPEVVVYGPEHLAAHFPLNHYSVLKPAEVRPPRGMCGSDMWRCRGWQGMPQVRCTPSNAHAALCRIGIPPRVSTRGDERDPNTCWLRAAANVAQAARACGAYTSAGCPKCAYGRALSEARTHEAFAALSQRWIASHADASLDGTGDPLDPLMETVGCACSRVWVGSEHEAPPDHLLVSLHRAPNGPWGVVLEVRARPEGGNPTGHFVCAVGGGPRRVSDRPHLWLAVPLSRGGGTCAATDEGLAQAYYDDLEVRRLGDDAMARAALASVQRPRKGPYNIKVWNMAAGAGKTTRILAAFTREDLYVCPTNALLHEIQAKLRARDIDIKNAATYERALTKPLAAYRRIYIDEAFTLGGEYCAFVASQTTAEVICVGDRDQCGPHYANNCRTPVPDRWPTERSRHTWRFPDCWAARLRAGLDYDVEGEHAGTFACNLWDGRQVDLHLAFSRETVRRLHEAGIRAYTVREAQGMSVGTACIHVGRDGTDVALALTRDLAIVSLTRASDALYLHELEDGSLRAAGLSAFLDAGALAELKEVPAGIDRVVAVEQAPPPLPPADGIPEAQDVPPFCPRTLEELVFGRAGHPHYADLNRVTEGEREVRYMRISRHLLNKNHTEMPGTERVLSAVCAVRRYRAGEDGSTLRTAVARQHPRPFRQIPPPRVTAGVAQEWRMTYLRERIDLTDVYTQMGVAARELTDRYARRYPEIFAGMCTAQSLSVPAFLKATLKCVDAALGPRDTEDCHAAQGKAGLEIRAWAKEWVQVMSPHFRAIQKIIMRALRPQFLVAAGHTEPEVDAWWQAHYTTNAIEVDFTEFDMNQTLATRDVELEISAALLGLPCAEDYRALRAGSYCTLRELGSTETGCERTSGEPATLLHNTTVAMCMAMRMVPKGVRWAGIFQGDDMVIFLPEGARSAALKWTPSEVGLFGFHIPVKHVSTPTPSFCGHVGTAAGLFHDVMHQAIKVLCRRFDPDVLEEQQVALLDRLRGVYAALPDTVAANAAYYDYSAERVLAIVRELTAYARGRGLDHPATIGALEEIQTPYARANLHDAD.

The required for efficient proteolysis and P150-P90 interaction stretch occupies residues 36 to 49 (EVRDVVTAAQKRAI). Residues 57-247 (VFTQMQVSDH…TRPCTTRIYQ (191 aa)) enclose the Alphavirus-like MT domain. The segment at 715-805 (GQLALTSPPP…PATPTRADPD (91 aa)) is disordered. Pro residues-rich tracts occupy residues 721–730 (SPPPDNPPPP) and 744–764 (GPPPPAPVRDPPPLPPSPPAP). Short sequence motifs (pxxPxR; class II SH3-binding) lie at residues 727 to 732 (PPPPRR), 747 to 752 (PPAPVR), and 761 to 766 (PPAPRR). Residues 806–985 (SDIVESYARA…LMHASVLVGA (180 aa)) form the Macro domain. Positions 992–1032 (VSPPPTEPLASCPADDPGRSTQRTASPPAAPPGDAAAPESR) are disordered. The Peptidase C27 domain maps to 1000–1301 (LASCPADDPG…WLAVPLSRGG (302 aa)). The For cysteine protease activity role is filled by Cys-1152. Residues 1152–1183 (CWLRAAANVAQAARACGAYTSAGCPKCAYGRA) are interaction with host CALM1. Zn(2+) contacts are provided by Cys-1175, Cys-1178, Cys-1227, and His-1273. Residues 1193-1228 (FAALSQRWIASHADASLDGTGDPLDPLMETVGCACS) form an EF-hand-like region. His-1273 serves as the catalytic For cysteine protease activity. Positions 1320 to 1468 (EVRRLGDDAM…VPDRWPTERS (149 aa)) constitute a (+)RNA virus helicase ATP-binding domain. Residue 1352 to 1359 (MAAGAGKT) participates in a ribonucleoside 5'-triphosphate binding. In terms of domain architecture, (+)RNA virus helicase C-terminal spans 1469–1609 (RHTWRFPDCW…ELKEVPAGID (141 aa)). The tract at residues 1700-1900 (YRAGEDGSTL…VELEISAALL (201 aa)) is involved in P150-P90 interaction. The RdRp catalytic domain occupies 1870-1981 (TNAIEVDFTE…FLPEGARSAA (112 aa)). The Human RB1 binding signature appears at 1902–1906 (LPCAE).

As to quaternary structure, interacts with RNA-directed RNA polymerase p90. Interacts with host CALM1; this interaction is necessary for the protease activity and viral infectivity. Interacts with host C1QBP. Interacts with the capsid protein. In terms of assembly, interacts with human RB1/retinoblastoma protein. Interacts with protease/methyltransferase p150. Zn(2+) serves as cofactor. Post-translationally, specific enzymatic cleavage by its own cysteine protease yield mature proteins p150 and p90.

It is found in the host membrane. It localises to the host cytoplasm. Its subcellular location is the host perinuclear region. The enzyme catalyses RNA(n) + a ribonucleoside 5'-triphosphate = RNA(n+1) + diphosphate. It carries out the reaction a ribonucleoside 5'-triphosphate + H2O = a ribonucleoside 5'-diphosphate + phosphate + H(+). It catalyses the reaction ATP + H2O = ADP + phosphate + H(+). Functionally, probable principal replicase for the negative-strand DNA, which replicates the 40S (+) genomic RNA into (-) antigenomic RNA. It cannot replicate the (-) into (+) until cleaved into p150 and p90 mature proteins. Its function is as follows. Protease that cleaves the precursor polyprotein into two mature products. Together with RNA-directed RNA polymerase p90, replicates the 40S genomic and antigenomic RNA by recognizing replications specific signals. The heterodimer P150/p90 is probably the principal replicase for positive-strand genomic RNA and the 24S subgenomic RNA, which codes for structural proteins. Responsible for the mRNA-capping of the viral mRNAs. This function is necessary since all viral RNAs are synthesized in the cytoplasm, and host capping enzymes are restricted to the nucleus. Forms fibers late in the infection that may be involved in cell-to-cell spread of the virus RNA in the absence of virus particle formation. Together with protease/methyltransferase p150, replicates the 40S genomic and antigenomic RNA by recognizing replications specific signals. The heterodimer P150/p90 is probably the principal replicase for positive-strand genomic RNA and the 24S subgenomic RNA, which codes for structural proteins. A helicase activity is probably also present. The polypeptide is Non-structural polyprotein p200 (Homo sapiens (Human)).